We begin with the raw amino-acid sequence, 606 residues long: Retrovirus-related Pol polyprotein from type-1 retrotransposable element R2 (606 aa).

The 208-residue stretch at 1–208 folds into the Reverse transcriptase domain; sequence GTLANIIMLE…NTFKYLGLTF (208 aa). The tract at residues 331-606 is nucleic acid-binding endonuclease; that stretch reads IFNIEGPARS…PPDPPRPVPP (276 aa).

It catalyses the reaction DNA(n) + a 2'-deoxyribonucleoside 5'-triphosphate = DNA(n+1) + diphosphate. The chain is Retrovirus-related Pol polyprotein from type-1 retrotransposable element R2 from Popillia japonica (Japanese beetle).